The sequence spans 98 residues: NADH-ubiquinone oxidoreductase chain 4L (98 aa).

The next 3 helical transmembrane spans lie at 1 to 21 (MSLVYMNIMTAFTVSLTGLLM), 29 to 49 (SLLCLEGMMLALFVMATLTIL), and 61 to 81 (IILLVFAACEAALGLSLLVMV).

It belongs to the complex I subunit 4L family. Core subunit of respiratory chain NADH dehydrogenase (Complex I) which is composed of 45 different subunits.

Its subcellular location is the mitochondrion inner membrane. It carries out the reaction a ubiquinone + NADH + 5 H(+)(in) = a ubiquinol + NAD(+) + 4 H(+)(out). In terms of biological role, core subunit of the mitochondrial membrane respiratory chain NADH dehydrogenase (Complex I) which catalyzes electron transfer from NADH through the respiratory chain, using ubiquinone as an electron acceptor. Part of the enzyme membrane arm which is embedded in the lipid bilayer and involved in proton translocation. In Elaphodus cephalophus (Tufted deer), this protein is NADH-ubiquinone oxidoreductase chain 4L (MT-ND4L).